Reading from the N-terminus, the 251-residue chain is Meso-2,3-butanediol dehydrogenase (251 aa).

The NAD(+) site is built by asparagine 15, methionine 17, aspartate 36, aspartate 60, valine 61, and asparagine 87. Serine 138, serine 140, and tyrosine 151 together coordinate (R)-acetoin. Serine 138 provides a ligand contact to (S)-acetoin. 4 residues coordinate NAD(+): tyrosine 151, lysine 155, valine 184, and threonine 186. Tyrosine 151 provides a ligand contact to (S)-acetoin. The active-site Proton acceptor is tyrosine 151.

Belongs to the short-chain dehydrogenases/reductases (SDR) family. In terms of assembly, homotetramer; dimer of dimers.

The catalysed reaction is (R,S)-butane-2,3-diol + NAD(+) = (R)-acetoin + NADH + H(+). It carries out the reaction (S,S)-butane-2,3-diol + NAD(+) = (S)-acetoin + NADH + H(+). The enzyme catalyses (S)-acetoin + NAD(+) = diacetyl + NADH + H(+). Its activity is regulated as follows. Oxidation of meso-2,3-butanediol is enhanced in the presence of Fe(2+). Reduction of diacetyl and (3S/3R)-acetoin is slightly enhanced in the presence of Mg(2+) and Mn(2+). Activity is inhibited by several metal ions, particularly Fe(3+) for reduction of diacetyl and acetoin. In terms of biological role, catalyzes the NAD-dependent oxidation of meso-2,3-butanediol to (3R)-acetoin, and of (2S,3S)-2,3-butanediol to (3S)-acetoin, with much lower efficiency. Can also oxidize several primary alcohols such as glycerol, 1-2-pentanediol and 1,2-propanediol, with lower activity. Cannot use (2R,3R)-2,3-butanediol. In the presence of NADH, catalyzes the reduction of (3R)-acetoin to meso-2,3-butanediol, of (3S)-acetoin to (2S,3S)-2,3-butanediol and of diacetyl to (3S)-acetoin. No activity is detected with NADPH/NADP(+). The protein is Meso-2,3-butanediol dehydrogenase of Serratia marcescens.